The primary structure comprises 295 residues: uncharacterized protein (295 aa).

The signal sequence occupies residues 1–19; sequence MHKLLLIITVFFTFNVAQA.

This is an uncharacterized protein from Rickettsia prowazekii (strain Madrid E).